The chain runs to 204 residues: Peptidyl-tRNA hydrolase 2 (204 aa).

TRNA is bound at residue Tyr-37. His-42 functions as the Proton acceptor in the catalytic mechanism. TRNA is bound by residues Phe-86, Asn-88, and Asn-134.

It belongs to the PTH family. As to quaternary structure, monomer.

Its subcellular location is the cytoplasm. The enzyme catalyses an N-acyl-L-alpha-aminoacyl-tRNA + H2O = an N-acyl-L-amino acid + a tRNA + H(+). Hydrolyzes ribosome-free peptidyl-tRNAs (with 1 or more amino acids incorporated), which drop off the ribosome during protein synthesis, or as a result of ribosome stalling. In terms of biological role, catalyzes the release of premature peptidyl moieties from peptidyl-tRNA molecules trapped in stalled 50S ribosomal subunits, and thus maintains levels of free tRNAs and 50S ribosomes. The sequence is that of Peptidyl-tRNA hydrolase 2 from Corynebacterium glutamicum (strain ATCC 13032 / DSM 20300 / JCM 1318 / BCRC 11384 / CCUG 27702 / LMG 3730 / NBRC 12168 / NCIMB 10025 / NRRL B-2784 / 534).